We begin with the raw amino-acid sequence, 344 residues long: Cysteine proteinase 5 (344 aa).

A signal peptide spans 1–17 (MKVLSFLCVLLVSVATA). A propeptide spans 18–111 (KQQFSELQYR…TQEEKVFTTS (94 aa)) (activation peptide). Disulfide bonds link Cys-133–Cys-174, Cys-167–Cys-207, and Cys-265–Cys-333. The active site involves Cys-136. The active site involves His-272. Asn-297 carries an N-linked (GlcNAc...) asparagine glycan. Asn-311 is an active-site residue.

It belongs to the peptidase C1 family. Glycosylated; contains GlcNAc-alpha-1-P-Ser residues.

It localises to the lysosome. This Dictyostelium discoideum (Social amoeba) protein is Cysteine proteinase 5 (cprE).